A 489-amino-acid polypeptide reads, in one-letter code: Glutamate--tRNA ligase (489 aa).

The 'HIGH' region signature appears at 12–22; the sequence is PSPTGIPHVGM. A 'KMSKS' region motif is present at residues 256 to 260; sequence KLSKR. ATP is bound at residue Lys-259.

The protein belongs to the class-I aminoacyl-tRNA synthetase family. Glutamate--tRNA ligase type 1 subfamily. Monomer.

It localises to the cytoplasm. The enzyme catalyses tRNA(Glu) + L-glutamate + ATP = L-glutamyl-tRNA(Glu) + AMP + diphosphate. Functionally, catalyzes the attachment of glutamate to tRNA(Glu) in a two-step reaction: glutamate is first activated by ATP to form Glu-AMP and then transferred to the acceptor end of tRNA(Glu). This Mycobacterium marinum (strain ATCC BAA-535 / M) protein is Glutamate--tRNA ligase.